We begin with the raw amino-acid sequence, 431 residues long: uncharacterized protein (431 aa).

11 helical membrane passes run 33–53 (VARV…VIYL), 63–83 (FSVF…ANGL), 111–131 (VSGM…PLWS), 143–163 (VALL…LGML), 197–217 (LVGF…MLMT), 241–261 (AHSI…PVLL), 273–293 (GVVI…LTAM), 318–338 (LIGG…PWIM), 358–378 (AAAV…AAAL), 383–403 (SLGW…PLSL), and 407–427 (TVVA…VALA).

It to M.tuberculosis Rv1510 and Rv3630.

It localises to the cell membrane. This is an uncharacterized protein from Mycobacterium bovis (strain ATCC BAA-935 / AF2122/97).